The following is a 552-amino-acid chain: MKDRRRRETVSWNRFFWCTLLLVLSCVLFTASTFREKFQPEIVSAWRQPAMEATTTIMSTNSPAKPSISIRETVMLPDQVLIFVNYPQSSRLFTKEDFSCVYFSRNSTSLSETQLKKPPNQIDGTDVNNQIVRCPLNPRGFSVSLELKSGGGYINPGPTHRWDSLVYEAMIDRDNTTVVFVKGFNLRADRIYNASKFECVYGWDFRKTKFVLRSNVISIAQEIVRCQTPLSILNNQLKVNNAIKVSIRLKGKGTLHSIARPGVQLLTDPEPGLRGEKPHEMCICTMLRNQGRFLKEWVMYHSQIGVERWFIYDNNSEDDIDSVIESLIDAKFNISRHVWPWVKAQEAGFAHCALRARGLCEWVGFIDVDEFFHLPTGLNLQDAVKNQSNSGNNVAELRVSCHSFGPSGLKHVPAQGVTVGYTCRMMLPERHKSIVKPEALNSTLINVVHHFHLRDGFRYVNADKGILVINHYKYQVWEVFKEKFYRRVATYVVDWQNEQNVGSKDRAPGLGTRAVEPPDWSSRFCEVSDTGLRDRILQNFLDPLTDLLPWQI.

A helical; Signal-anchor transmembrane segment spans residues 12 to 34; that stretch reads WNRFFWCTLLLVLSCVLFTASTF. The 244-residue stretch at 277 to 520 folds into the GT92 domain; that stretch reads KPHEMCICTM…GTRAVEPPDW (244 aa).

This sequence belongs to the glycosyltransferase 92 family.

It localises to the membrane. This chain is Glycosyltransferase family 92 protein RCOM_0530710, found in Ricinus communis (Castor bean).